We begin with the raw amino-acid sequence, 300 residues long: D-alanine--D-alanine ligase (300 aa).

An ATP-grasp domain is found at 99–293; it reads KKILKYANIN…FAELLNSIVK (195 aa). 126 to 181 is an ATP binding site; sequence IEKIGYPVFVKPNSGGSSVATNLVKDKEGIKEAVELALKYDKEVMIENYTKGEEIT. Asp248, Glu260, and Asn262 together coordinate Mg(2+).

The protein belongs to the D-alanine--D-alanine ligase family. Requires Mg(2+) as cofactor. The cofactor is Mn(2+).

The protein localises to the cytoplasm. It catalyses the reaction 2 D-alanine + ATP = D-alanyl-D-alanine + ADP + phosphate + H(+). It functions in the pathway cell wall biogenesis; peptidoglycan biosynthesis. In terms of biological role, cell wall formation. The sequence is that of D-alanine--D-alanine ligase from Clostridium botulinum (strain Langeland / NCTC 10281 / Type F).